We begin with the raw amino-acid sequence, 1005 residues long: Translocated actin-recruiting phosphoprotein (1005 aa).

The span at 1-10 shows a compositional bias: polar residues; that stretch reads MTNSISGYQP. 6 disordered regions span residues 1 to 36, 73 to 155, 487 to 521, 542 to 626, 671 to 749, and 792 to 847; these read MTNS…SVST, APNV…SNYD, INWG…SPTP, DTNV…DGPA, GSAQ…GPSG, and TGTS…TSLM. 2 stretches are compositionally biased toward low complexity: residues 11-36 and 73-121; these read TVTT…SVST and APNV…SSDH. Residues 130–154 show a composition bias toward polar residues; that stretch reads GSNSGDISNNYDDVGSNNGDISSNY. Low complexity-rich tracts occupy residues 542 to 578, 593 to 612, 720 to 736, and 831 to 846; these read DTNV…TDDI, GDIS…VSSS, SSSG…SSES, and STTT…TTSL.

It belongs to the chlamydial CPn_0572/CT_456/TC_0741 family. In terms of processing, phosphorylated on a tyrosine on attachment to the host cell. Tyrosine phosphorylation is temporally and spatially associated with recruitment of actin to the site of chlamydial entry. Phosphorylated Tarp seems to remain cytoplasmically exposed on the inclusion membrane at one side of internalized elementary bodies for several hours after entry.

The protein resides in the secreted. Functionally, appears to initiate or participate in signaling events that regulate the actin recruitment, which ultimately leads to internalization. The polypeptide is Translocated actin-recruiting phosphoprotein (tarP) (Chlamydia trachomatis serovar D (strain ATCC VR-885 / DSM 19411 / UW-3/Cx)).